The chain runs to 253 residues: Triosephosphate isomerase (253 aa).

Asn9–Lys11 is a substrate binding site. His95 (electrophile) is an active-site residue. The active-site Proton acceptor is the Glu167. Substrate is bound by residues Gly173, Ser213, and Gly234–Gly235. Ser213 bears the Phosphoserine mark.

Belongs to the triosephosphate isomerase family. Homodimer.

The protein resides in the cytoplasm. It carries out the reaction D-glyceraldehyde 3-phosphate = dihydroxyacetone phosphate. It functions in the pathway carbohydrate biosynthesis; gluconeogenesis. It participates in carbohydrate degradation; glycolysis; D-glyceraldehyde 3-phosphate from glycerone phosphate: step 1/1. Involved in the gluconeogenesis. Catalyzes stereospecifically the conversion of dihydroxyacetone phosphate (DHAP) to D-glyceraldehyde-3-phosphate (G3P). The protein is Triosephosphate isomerase of Bacillus pumilus (strain SAFR-032).